The following is a 1508-amino-acid chain: Gem-associated protein 5 (1508 aa).

Positions 1–124 (MGQEPRTLPP…LHWSPRVKDL (124 aa)) are important for interaction with U1 snRNA. The interval 13-15 (NWY) is interaction with U4 snRNA. S48 bears the Phosphoserine mark. T51 carries the post-translational modification Phosphothreonine. WD repeat units lie at residues 62–104 (GHTE…VVTE), 107–148 (LHQH…QHLF), 150–189 (EPRT…EVIH), 193–264 (GHDD…GVMI), 280–321 (TVKE…RRKY), 333–374 (HSRI…CSWT), 377–417 (SLGG…NNYD), 424–464 (GVKS…PPQI), 468–509 (YHKK…IVLQ), 533–573 (KYKL…LICT), and 576–622 (QHHK…ESSP). S624 bears the Phosphoserine mark. WD repeat units lie at residues 637–677 (GHTA…PLCN) and 680–720 (GHRG…HSRP). Positions 715–790 (QDHSRPPQGK…EGEEQAREPE (76 aa)) are disordered. The segment covering 739 to 748 (AKPKKKKKPT) has biased composition (basic residues). T751 is modified (phosphothreonine). A Glycyl lysine isopeptide (Lys-Gly) (interchain with G-Cter in SUMO2) cross-link involves residue K754. A phosphoserine mark is found at S757, S770, S778, and S847. Disordered stretches follow at residues 1313–1343 (EPSQ…ELDL) and 1389–1428 (QKSQ…KNEP). Residues 1362-1393 (EKHASLQNSQRTVAEVQETLAEMIRQHQKSQL) adopt a coiled-coil conformation. Residues 1390–1399 (KSQLCKSTAN) are compositionally biased toward polar residues.

Belongs to the WD repeat gemin-5 family. As to quaternary structure, part of the core SMN complex that contains SMN1, GEMIN2/SIP1, DDX20/GEMIN3, GEMIN4, GEMIN5, GEMIN6, GEMIN7, GEMIN8 and STRAP/UNRIP. Part of the SMN-Sm complex that contains SMN1, GEMIN2/SIP1, DDX20/GEMIN3, GEMIN4, GEMIN5, GEMIN6, GEMIN7, GEMIN8, STRAP/UNRIP and the Sm proteins SNRPB, SNRPD1, SNRPD2, SNRPD3, SNRPE, SNRPF and SNRPG. Interacts with GEMIN2; the interaction is direct. Interacts with SMN1, SNRPB, SNRPD1, SNRPD2, SNRPD3 and SNRPE; the interaction is direct. Interacts with cytosolic DDX20/GEMIN3 and GEMIN4. Interacts with SNRNP70 and HNRNPU. Identified in a complex with 80S ribosomes; binds to the 60S large ribosomal subunit. Interacts with the ribosomal subunits RPL3 and RPL4.

The protein localises to the nucleus. Its subcellular location is the nucleoplasm. The protein resides in the gem. It is found in the cytoplasm. In terms of biological role, the SMN complex catalyzes the assembly of small nuclear ribonucleoproteins (snRNPs), the building blocks of the spliceosome, and thereby plays an important role in the splicing of cellular pre-mRNAs. Most spliceosomal snRNPs contain a common set of Sm proteins SNRPB, SNRPD1, SNRPD2, SNRPD3, SNRPE, SNRPF and SNRPG that assemble in a heptameric protein ring on the Sm site of the small nuclear RNA to form the core snRNP (Sm core). In the cytosol, the Sm proteins SNRPD1, SNRPD2, SNRPE, SNRPF and SNRPG are trapped in an inactive 6S pICln-Sm complex by the chaperone CLNS1A that controls the assembly of the core snRNP. To assemble core snRNPs, the SMN complex accepts the trapped 5Sm proteins from CLNS1A forming an intermediate. Binding of snRNA inside 5Sm ultimately triggers eviction of the SMN complex, thereby allowing binding of SNRPD3 and SNRPB to complete assembly of the core snRNP. Within the SMN complex, GEMIN5 recognizes and delivers the small nuclear RNAs (snRNAs) to the SMN complex. Binds to the 7-methylguanosine cap of RNA molecules. Binds to the 3'-UTR of SMN1 mRNA and regulates its translation; does not affect mRNA stability. May play a role in the regulation of protein synthesis via its interaction with ribosomes. This chain is Gem-associated protein 5 (GEMIN5), found in Homo sapiens (Human).